Reading from the N-terminus, the 236-residue chain is Increased recombination centers protein 22-2 (236 aa).

An N-terminal signal peptide occupies residues 1 to 19; sequence MKFSAILTALTATIATVAG. The Lumenal segment spans residues 20–161; it reads YETSGKPHTV…AAVSFFDPRL (142 aa). Residues 162–182 form a helical membrane-spanning segment; it reads IFLELVLLATFGGIAYFVYEI. The Cytoplasmic portion of the chain corresponds to 183 to 236; that stretch reads WGKQYLRGTAPVKVPVKKSGSPVAVKEASPVGSASGFDESWIPEAHLKKNKKKA.

The protein belongs to the IRC22 family.

The protein resides in the endoplasmic reticulum membrane. Its function is as follows. Is probably involved in a pathway contributing to genomic integrity. The polypeptide is Increased recombination centers protein 22-2 (IRC22-2) (Candida tropicalis (strain ATCC MYA-3404 / T1) (Yeast)).